A 217-amino-acid chain; its full sequence is Cytokinin riboside 5'-monophosphate phosphoribohydrolase LOG7 (217 aa).

Substrate is bound by residues glutamate 79, 97 to 98 (RK), 114 to 120 (GYGTLEE), and threonine 126.

The protein belongs to the LOG family. In terms of tissue distribution, expressed in roots and shoots. Detected in the epidermis of the root elongation zone, cotyledon and leaves, in trichomes and pollen.

It localises to the cytoplasm. The protein resides in the nucleus. It carries out the reaction N(6)-(dimethylallyl)adenosine 5'-phosphate + H2O = N(6)-dimethylallyladenine + D-ribose 5-phosphate. The catalysed reaction is 9-ribosyl-trans-zeatin 5'-phosphate + H2O = trans-zeatin + D-ribose 5-phosphate. Cytokinin-activating enzyme working in the direct activation pathway. Phosphoribohydrolase that converts inactive cytokinin nucleotides to the biologically active free-base forms. The polypeptide is Cytokinin riboside 5'-monophosphate phosphoribohydrolase LOG7 (LOG7) (Arabidopsis thaliana (Mouse-ear cress)).